Reading from the N-terminus, the 1195-residue chain is Chromosome partition protein Smc (1195 aa).

33-40 (PNGSGKSN) is a binding site for ATP. Coiled coils occupy residues 185-241 (GVAQ…RQEQ), 273-348 (DAAT…IQAL), and 380-528 (QYQQ…QETQ). Positions 542 to 658 (PGVHGLVAQL…FERLDQARRY (117 aa)) constitute an SMC hinge domain. A coiled-coil region spans residues 698–1043 (GESAEVRAIR…ELLLRIENFT (346 aa)).

The protein belongs to the SMC family. As to quaternary structure, homodimer.

It is found in the cytoplasm. Functionally, required for chromosome condensation and partitioning. This is Chromosome partition protein Smc from Synechococcus sp. (strain ATCC 27144 / PCC 6301 / SAUG 1402/1) (Anacystis nidulans).